The primary structure comprises 475 residues: Ankyrin repeat, SAM and basic leucine zipper domain-containing protein 1 (475 aa).

The segment at 1–25 is disordered; that stretch reads MAASALRGLPVAGGGESSESEDDGW. Phosphoserine is present on residues Ser17, Ser18, and Ser20. 6 ANK repeats span residues 45–74, 78–107, 110–144, 148–177, 181–210, and 214–243; these read EKKE…SVDS, YGWT…NASF, DKQS…DPNV, RLMT…EVNT, NGYT…NKML, and DGKM…PLEG. In terms of domain architecture, SAM spans 272–334; the sequence is SYTAFGDLEV…KILAALKELQ (63 aa).

As to quaternary structure, interacts with DDX4, PIWIL1, RANBP9 and TDRD1. Expressed exclusively in the testis and ovary and at higher levels in the adult testis compared with the adult ovary.

It localises to the cytoplasm. Plays a central role during spermatogenesis by repressing transposable elements and preventing their mobilization, which is essential for the germline integrity. Acts via the piRNA metabolic process, which mediates the repression of transposable elements during meiosis by forming complexes composed of piRNAs and Piwi proteins and governs the methylation and subsequent repression of transposons. Its association with pi-bodies suggests a participation in the primary piRNAs metabolic process. Required prior to the pachytene stage to facilitate the production of multiple types of piRNAs, including those associated with repeats involved in the regulation of retrotransposons. May act by mediating protein-protein interactions during germ cell maturation. This is Ankyrin repeat, SAM and basic leucine zipper domain-containing protein 1 from Homo sapiens (Human).